A 261-amino-acid polypeptide reads, in one-letter code: Cytochrome c oxidase subunit 3 (261 aa).

Topologically, residues 1-15 are mitochondrial matrix; that stretch reads MVHQSHAYHMLKPSP. A helical transmembrane segment spans residues 16–34; that stretch reads WPLTGALSALLMTSGLAMW. The Mitochondrial intermembrane portion of the chain corresponds to 35-40; it reads FHFHST. Residues 41-66 traverse the membrane as a helical segment; the sequence is TLLLTGMLTNALTMYQWWRDVVREST. The Mitochondrial matrix portion of the chain corresponds to 67–72; the sequence is YQGHHT. Residues 73–105 traverse the membrane as a helical segment; sequence LPVQKGLRYGMILFITSEVFFFAGFFWAFYHSS. The Mitochondrial intermembrane segment spans residues 106 to 128; that stretch reads LAPTPQLGGHWPPTGITPLNPLE. The helical transmembrane segment at 129–152 threads the bilayer; that stretch reads VPLLNTAVLLASGVSITWAHHSLM. The Mitochondrial matrix portion of the chain corresponds to 153 to 155; sequence ENN. Residues 156–183 traverse the membrane as a helical segment; sequence RTQMIQALLITILLGIYFTLLQASEYIE. Over 184–190 the chain is Mitochondrial intermembrane; the sequence is APFTISD. The chain crosses the membrane as a helical span at residues 191–223; it reads GIYGSTFFMTTGFHGLHVIIGSTFLTVCLSCQL. Residues 224–232 are Mitochondrial matrix-facing; sequence LFHFTSKHH. A helical transmembrane segment spans residues 233–256; that stretch reads FGFEAAAWYWHFVDVVWLFLYVSI. Topologically, residues 257–261 are mitochondrial intermembrane; sequence YWWGS.

Belongs to the cytochrome c oxidase subunit 3 family. As to quaternary structure, component of the cytochrome c oxidase (complex IV, CIV), a multisubunit enzyme composed of 14 subunits. The complex is composed of a catalytic core of 3 subunits MT-CO1, MT-CO2 and MT-CO3, encoded in the mitochondrial DNA, and 11 supernumerary subunits COX4I, COX5A, COX5B, COX6A, COX6B, COX6C, COX7A, COX7B, COX7C, COX8 and NDUFA4, which are encoded in the nuclear genome. The complex exists as a monomer or a dimer and forms supercomplexes (SCs) in the inner mitochondrial membrane with NADH-ubiquinone oxidoreductase (complex I, CI) and ubiquinol-cytochrome c oxidoreductase (cytochrome b-c1 complex, complex III, CIII), resulting in different assemblies (supercomplex SCI(1)III(2)IV(1) and megacomplex MCI(2)III(2)IV(2)).

Its subcellular location is the mitochondrion inner membrane. It catalyses the reaction 4 Fe(II)-[cytochrome c] + O2 + 8 H(+)(in) = 4 Fe(III)-[cytochrome c] + 2 H2O + 4 H(+)(out). Its function is as follows. Component of the cytochrome c oxidase, the last enzyme in the mitochondrial electron transport chain which drives oxidative phosphorylation. The respiratory chain contains 3 multisubunit complexes succinate dehydrogenase (complex II, CII), ubiquinol-cytochrome c oxidoreductase (cytochrome b-c1 complex, complex III, CIII) and cytochrome c oxidase (complex IV, CIV), that cooperate to transfer electrons derived from NADH and succinate to molecular oxygen, creating an electrochemical gradient over the inner membrane that drives transmembrane transport and the ATP synthase. Cytochrome c oxidase is the component of the respiratory chain that catalyzes the reduction of oxygen to water. Electrons originating from reduced cytochrome c in the intermembrane space (IMS) are transferred via the dinuclear copper A center (CU(A)) of subunit 2 and heme A of subunit 1 to the active site in subunit 1, a binuclear center (BNC) formed by heme A3 and copper B (CU(B)). The BNC reduces molecular oxygen to 2 water molecules using 4 electrons from cytochrome c in the IMS and 4 protons from the mitochondrial matrix. This chain is Cytochrome c oxidase subunit 3 (MT-CO3), found in Pongo pygmaeus (Bornean orangutan).